The sequence spans 371 residues: Queuine tRNA-ribosyltransferase (371 aa).

The active-site Proton acceptor is D90. Substrate-binding positions include 90 to 94 (DSGGF), D144, Q188, and G215. The tract at residues 246–252 (GVGTPED) is RNA binding. The active-site Nucleophile is D265. The tract at residues 270–274 (TRNAR) is RNA binding; important for wobble base 34 recognition. Zn(2+) contacts are provided by C303, C305, C308, and H334.

Belongs to the queuine tRNA-ribosyltransferase family. As to quaternary structure, homodimer. Within each dimer, one monomer is responsible for RNA recognition and catalysis, while the other monomer binds to the replacement base PreQ1. Zn(2+) serves as cofactor.

It catalyses the reaction 7-aminomethyl-7-carbaguanine + guanosine(34) in tRNA = 7-aminomethyl-7-carbaguanosine(34) in tRNA + guanine. Its pathway is tRNA modification; tRNA-queuosine biosynthesis. In terms of biological role, catalyzes the base-exchange of a guanine (G) residue with the queuine precursor 7-aminomethyl-7-deazaguanine (PreQ1) at position 34 (anticodon wobble position) in tRNAs with GU(N) anticodons (tRNA-Asp, -Asn, -His and -Tyr). Catalysis occurs through a double-displacement mechanism. The nucleophile active site attacks the C1' of nucleotide 34 to detach the guanine base from the RNA, forming a covalent enzyme-RNA intermediate. The proton acceptor active site deprotonates the incoming PreQ1, allowing a nucleophilic attack on the C1' of the ribose to form the product. After dissociation, two additional enzymatic reactions on the tRNA convert PreQ1 to queuine (Q), resulting in the hypermodified nucleoside queuosine (7-(((4,5-cis-dihydroxy-2-cyclopenten-1-yl)amino)methyl)-7-deazaguanosine). This chain is Queuine tRNA-ribosyltransferase, found in Neisseria meningitidis serogroup C (strain 053442).